We begin with the raw amino-acid sequence, 235 residues long: MSIHIGAKEGQIAETILLPGDPLRAKFIAETFLENPVCYNEVRGMLGYTGTYKGKKISVQGTGMGVPSISIYVNELIRDYGVKNLIRVGTAGGMQEDIKVRDLVLAMSSHTDSAINKVRFNGLDFAPTASFKLLKAAYDTAVEKGYSPKVGSVFTADSFYNDNPEAWKQWAKFGTLAVEMETAALYTLAAKYGVNALTILTISDHLITAEETTSEERQTTFTKMMEVALDAAITL.

Residue His-4 coordinates a purine D-ribonucleoside. Residues Gly-20, Arg-24, Arg-43, and 87-90 (RVGT) each bind phosphate. Residues 179-181 (EME) and 203-204 (SD) each bind a purine D-ribonucleoside. Asp-204 acts as the Proton donor in catalysis.

Belongs to the PNP/UDP phosphorylase family. Homohexamer; trimer of homodimers.

It catalyses the reaction a purine D-ribonucleoside + phosphate = a purine nucleobase + alpha-D-ribose 1-phosphate. The catalysed reaction is a purine 2'-deoxy-D-ribonucleoside + phosphate = a purine nucleobase + 2-deoxy-alpha-D-ribose 1-phosphate. Functionally, catalyzes the reversible phosphorolytic breakdown of the N-glycosidic bond in the beta-(deoxy)ribonucleoside molecules, with the formation of the corresponding free purine bases and pentose-1-phosphate. The sequence is that of Purine nucleoside phosphorylase DeoD-type from Clostridium perfringens (strain ATCC 13124 / DSM 756 / JCM 1290 / NCIMB 6125 / NCTC 8237 / Type A).